The sequence spans 496 residues: MLO-like protein 15 (496 aa).

Topologically, residues 1–9 (MAGGGTTLE) are extracellular. Residues 10 to 30 (YTPTWVVALVCSVIVSISFAV) traverse the membrane as a helical segment. The Cytoplasmic segment spans residues 31–59 (ERLIHRAGKHFKNNDQKQLFGALQKIKEE). Residues 60–80 (LMLVGFISLLLSVGQSKIAKI) traverse the membrane as a helical segment. At 81–147 (CISKELSEKF…MSLSALHELH (67 aa)) the chain is on the extracellular side. The helical transmembrane segment at 148-168 (IFIFVLAVAHIIFCLLTIVFG) threads the bilayer. The Cytoplasmic segment spans residues 169–269 (TMKIKQWKKW…KYLMRALNSD (101 aa)). The helical transmembrane segment at 270–290 (FKKVVGISWYLWVFVVLFLLL) threads the bilayer. Position 291 (Asn-291) is a topological domain, extracellular. The helical transmembrane segment at 292 to 312 (IVAWHVYFWLAFIPLILLLAV) threads the bilayer. The Cytoplasmic segment spans residues 313 to 355 (GTKLEHIITDLAHEVAEKHIAVEGDLVVRPSDDLFWFQSPRLV). The chain crosses the membrane as a helical span at residues 356 to 376 (LFLIHFILFQNSFEIAYFFFI). Residues 377-397 (LFQFGWDSCIMDHVKFVIPRL) are Extracellular-facing. A helical transmembrane segment spans residues 398-418 (VIGVIIQLLCSYSTLPLYALV). At 419-496 (TQMGSSFKGA…KEKSEIAHHD (78 aa)) the chain is on the cytoplasmic side. The interval 432–453 (EQTQEHLVGWAKMAKRGVKKGA) is calmodulin-binding. Residues 454–496 (TQVGTSHDATSPRPSIQLNSLLGKGSSQQNQNPKEKSEIAHHD) are disordered. Over residues 455-485 (QVGTSHDATSPRPSIQLNSLLGKGSSQQNQN) the composition is skewed to polar residues. The span at 486–496 (PKEKSEIAHHD) shows a compositional bias: basic and acidic residues.

Belongs to the MLO family.

Its subcellular location is the membrane. Functionally, may be involved in modulation of pathogen defense and leaf cell death. Activity seems to be regulated by Ca(2+)-dependent calmodulin binding and seems not to require heterotrimeric G proteins. This is MLO-like protein 15 (MLO15) from Arabidopsis thaliana (Mouse-ear cress).